The following is a 188-amino-acid chain: Phosphatidylcholine-sterol acyltransferase (188 aa).

Residue N20 is glycosylated (N-linked (GlcNAc...) asparagine). H169 serves as the catalytic Charge relay system.

This sequence belongs to the AB hydrolase superfamily. Lipase family. In terms of tissue distribution, detected in blood plasma (at protein level).

The protein localises to the secreted. The catalysed reaction is a sterol + a 1,2-diacyl-sn-glycero-3-phosphocholine = a sterol ester + a 1-acyl-sn-glycero-3-phosphocholine. It catalyses the reaction a 1-O-alkyl-2-acetyl-sn-glycero-3-phosphocholine + H2O = a 1-O-alkyl-sn-glycero-3-phosphocholine + acetate + H(+). It carries out the reaction a 1-hexadecanoyl-2-acyl-sn-glycero-3-phosphocholine + (24S)-hydroxycholesterol = (24S)-24-hydroxycholesterol ester + 1-hexadecanoyl-sn-glycero-3-phosphocholine. The enzyme catalyses (24S)-hydroxycholesterol + 1-hexadecanoyl-2-(9Z,12Z-octadecadienoyl)-sn-glycero-3-phosphocholine = (24S)-hydroxycholesterol 3-linoleoate + 1-hexadecanoyl-sn-glycero-3-phosphocholine. The catalysed reaction is 1-hexadecanoyl-2-(5Z,8Z,11Z,14Z-eicosatetraenoyl)-sn-glycero-3-phosphocholine + cholesterol = cholesteryl (5Z,8Z,11Z,14Z)-eicosatetraenoate + 1-hexadecanoyl-sn-glycero-3-phosphocholine. It catalyses the reaction 1-hexadecanoyl-2-(9Z-octadecenoyl)-sn-glycero-3-phosphocholine + cholesterol = cholesteryl (9Z-octadecenoate) + 1-hexadecanoyl-sn-glycero-3-phosphocholine. It carries out the reaction 1-hexadecanoyl-2-(8Z,11Z,14Z-eicosatrienoyl)-sn-glycero-3-phosphocholine + cholesterol = cholesteryl (8Z,11Z,14Z)-eicosatrienoate + 1-hexadecanoyl-sn-glycero-3-phosphocholine. The enzyme catalyses 1-hexadecanoyl-2-(5Z,8Z,11Z-eicosatrienoyl)-sn-glycero-3-phosphocholine + cholesterol = cholesteryl (5Z,8Z,11Z)-eicosatrienoate + 1-hexadecanoyl-sn-glycero-3-phosphocholine. The catalysed reaction is 1-hexadecanoyl-2-(5Z,8Z,11Z,14Z,17Z-eicosapentaenoyl)-sn-glycero-3-phosphocholine + cholesterol = (5Z,8Z,11Z,14Z,17Z-eicosapentaenoyl)-cholesterol + 1-hexadecanoyl-sn-glycero-3-phosphocholine. It catalyses the reaction 1-hexadecanoyl-2-(9Z,12Z-octadecadienoyl)-sn-glycero-3-phosphocholine + cholesterol = cholesteryl (9Z,12Z)-octadecadienoate + 1-hexadecanoyl-sn-glycero-3-phosphocholine. It carries out the reaction 1-hexadecanoyl-2-(6Z,9Z,12Z-octadecatrienoyl)-sn-glycero-3-phosphocholine + cholesterol = (6Z,9Z,12Z-octadecatrienoyl)-cholesterol + 1-hexadecanoyl-sn-glycero-3-phosphocholine. The enzyme catalyses 1-hexadecanoyl-2-(11Z,14Z,17Z-eicosatrienoyl)-sn-glycero-3-phosphocholine + cholesterol = (11Z,14Z,17Z-eicosatrienoyl)-cholesterol + 1-hexadecanoyl-sn-glycero-3-phosphocholine. The catalysed reaction is 1-hexadecanoyl-2-(9Z,12Z,15Z-octadecatrienoyl)-sn-glycero-3-phosphocholine + cholesterol = (9Z,12Z,15Z-octadecatrienoyl)-cholesterol + 1-hexadecanoyl-sn-glycero-3-phosphocholine. It catalyses the reaction 1-hexadecanoyl-2-(9Z,12Z-octadecadienoyl)-sn-glycero-3-phosphocholine + H2O = (9Z,12Z)-octadecadienoate + 1-hexadecanoyl-sn-glycero-3-phosphocholine + H(+). It carries out the reaction 1-hexadecanoyl-2-(5Z,8Z,11Z,14Z-eicosatetraenoyl)-sn-glycero-3-phosphocholine + H2O = 1-hexadecanoyl-sn-glycero-3-phosphocholine + (5Z,8Z,11Z,14Z)-eicosatetraenoate + H(+). The enzyme catalyses a 1-O-alkyl-2-acetyl-sn-glycero-3-phosphocholine + 1-hexadecanoyl-sn-glycero-3-phosphocholine = 1-hexadecanoyl-2-acetyl-sn-glycero-3-phosphocholine + a 1-O-alkyl-sn-glycero-3-phosphocholine. Central enzyme in the extracellular metabolism of plasma lipoproteins. Synthesized mainly in the liver and secreted into plasma where it converts cholesterol and phosphatidylcholines (lecithins) to cholesteryl esters and lysophosphatidylcholines on the surface of high and low density lipoproteins (HDLs and LDLs). The cholesterol ester is then transported back to the liver. Also produced in the brain by primary astrocytes, and esterifies free cholesterol on nascent APOE-containing lipoproteins secreted from glia and influences cerebral spinal fluid (CSF) APOE- and APOA1 levels. Together with APOE and the cholesterol transporter ABCA1, plays a key role in the maturation of glial-derived, nascent lipoproteins. Required for remodeling high-density lipoprotein particles into their spherical forms. Has a preference for plasma 16:0-18:2 or 18:O-18:2 phosphatidylcholines. Catalyzes the hydrolysis of 1-O-alkyl-2-acetyl-sn-glycero-3-phosphocholine (platelet-activating factor or PAF) to 1-O-alkyl-sn-glycero-3-phosphocholine (lyso-PAF). Also catalyzes the transfer of the acetate group from PAF to 1-hexadecanoyl-sn-glycero-3-phosphocholine forming lyso-PAF. Catalyzes the esterification of (24S)-hydroxycholesterol (24(S)OH-C), also known as cerebrosterol to produce 24(S)OH-C monoesters. The chain is Phosphatidylcholine-sterol acyltransferase (LCAT) from Sus scrofa (Pig).